A 449-amino-acid chain; its full sequence is Glucose-6-phosphate isomerase (449 aa).

Catalysis depends on Glu-291, which acts as the Proton donor. Active-site residues include His-312 and Lys-426.

It belongs to the GPI family.

It is found in the cytoplasm. It carries out the reaction alpha-D-glucose 6-phosphate = beta-D-fructose 6-phosphate. It participates in carbohydrate biosynthesis; gluconeogenesis. Its pathway is carbohydrate degradation; glycolysis; D-glyceraldehyde 3-phosphate and glycerone phosphate from D-glucose: step 2/4. Catalyzes the reversible isomerization of glucose-6-phosphate to fructose-6-phosphate. The protein is Glucose-6-phosphate isomerase of Streptococcus agalactiae serotype Ia (strain ATCC 27591 / A909 / CDC SS700).